A 259-amino-acid polypeptide reads, in one-letter code: 1-(5-phosphoribosyl)-5-[(5-phosphoribosylamino)methylideneamino] imidazole-4-carboxamide isomerase (259 aa).

Asp8 serves as the catalytic Proton acceptor. Catalysis depends on Asp129, which acts as the Proton donor.

This sequence belongs to the HisA/HisF family.

It is found in the cytoplasm. The enzyme catalyses 1-(5-phospho-beta-D-ribosyl)-5-[(5-phospho-beta-D-ribosylamino)methylideneamino]imidazole-4-carboxamide = 5-[(5-phospho-1-deoxy-D-ribulos-1-ylimino)methylamino]-1-(5-phospho-beta-D-ribosyl)imidazole-4-carboxamide. Its pathway is amino-acid biosynthesis; L-histidine biosynthesis; L-histidine from 5-phospho-alpha-D-ribose 1-diphosphate: step 4/9. The chain is 1-(5-phosphoribosyl)-5-[(5-phosphoribosylamino)methylideneamino] imidazole-4-carboxamide isomerase from Pelotomaculum thermopropionicum (strain DSM 13744 / JCM 10971 / SI).